Reading from the N-terminus, the 468-residue chain is uncharacterized protein (468 aa).

The next 6 membrane-spanning stretches (helical) occupy residues 59 to 79 (IPIVIIAVIYSSFIFFFALFI), 135 to 155 (TWINSILEILALIYSFLLLLV), 215 to 235 (VFPFTPCPLPLLLFPIFLSIL), 297 to 317 (THCCLNVFASSAFFVLLMVLV), 348 to 368 (HFIPLILTVVIELVITGLVSY), and 385 to 405 (VFTVMFTIIAVFRFVFIIILF).

Its subcellular location is the membrane. This is an uncharacterized protein from Caenorhabditis elegans.